An 85-amino-acid chain; its full sequence is Cell division topological specificity factor (85 aa).

It belongs to the MinE family.

Its function is as follows. Prevents the cell division inhibition by proteins MinC and MinD at internal division sites while permitting inhibition at polar sites. This ensures cell division at the proper site by restricting the formation of a division septum at the midpoint of the long axis of the cell. The protein is Cell division topological specificity factor of Chromobacterium violaceum (strain ATCC 12472 / DSM 30191 / JCM 1249 / CCUG 213 / NBRC 12614 / NCIMB 9131 / NCTC 9757 / MK).